The chain runs to 307 residues: Acetaldehyde dehydrogenase 1 (307 aa).

Catalysis depends on Cys-131, which acts as the Acyl-thioester intermediate. NAD(+)-binding positions include Ser-162–Asn-170 and Asn-273.

The protein belongs to the acetaldehyde dehydrogenase family.

The catalysed reaction is acetaldehyde + NAD(+) + CoA = acetyl-CoA + NADH + H(+). The sequence is that of Acetaldehyde dehydrogenase 1 (salG) from Metapseudomonas furukawaii (Pseudomonas furukawaii).